Consider the following 343-residue polypeptide: Fructose-1,6-bisphosphatase, cytosolic (343 aa).

Mg(2+) contacts are provided by Glu71, Glu100, Asp121, Leu123, and Asp124. Residues Asp124–Ser127, Asn215, Tyr247, Tyr267, and Lys277 contribute to the substrate site. Position 283 (Glu283) interacts with Mg(2+).

The protein belongs to the FBPase class 1 family. The cofactor is Mg(2+).

The protein resides in the cytoplasm. The enzyme catalyses beta-D-fructose 1,6-bisphosphate + H2O = beta-D-fructose 6-phosphate + phosphate. The chain is Fructose-1,6-bisphosphatase, cytosolic (CFBP) from Saccharum hybrid (Sugarcane).